Here is a 739-residue protein sequence, read N- to C-terminus: Phosphoribosylformylglycinamidine synthase subunit PurL (739 aa).

The active site involves H53. 2 residues coordinate ATP: Y56 and K95. E97 is a binding site for Mg(2+). Residues 98–101 (SHNH) and R120 each bind substrate. Catalysis depends on H99, which acts as the Proton acceptor. Position 121 (D121) interacts with Mg(2+). Q244 is a substrate binding site. D274 contacts Mg(2+). 318 to 320 (ESQ) is a substrate binding site. Residues D501 and G538 each contribute to the ATP site. Residue N539 coordinates Mg(2+). S541 is a substrate binding site.

This sequence belongs to the FGAMS family. As to quaternary structure, monomer. Part of the FGAM synthase complex composed of 1 PurL, 1 PurQ and 2 PurS subunits.

Its subcellular location is the cytoplasm. The catalysed reaction is N(2)-formyl-N(1)-(5-phospho-beta-D-ribosyl)glycinamide + L-glutamine + ATP + H2O = 2-formamido-N(1)-(5-O-phospho-beta-D-ribosyl)acetamidine + L-glutamate + ADP + phosphate + H(+). The protein operates within purine metabolism; IMP biosynthesis via de novo pathway; 5-amino-1-(5-phospho-D-ribosyl)imidazole from N(2)-formyl-N(1)-(5-phospho-D-ribosyl)glycinamide: step 1/2. Its function is as follows. Part of the phosphoribosylformylglycinamidine synthase complex involved in the purines biosynthetic pathway. Catalyzes the ATP-dependent conversion of formylglycinamide ribonucleotide (FGAR) and glutamine to yield formylglycinamidine ribonucleotide (FGAM) and glutamate. The FGAM synthase complex is composed of three subunits. PurQ produces an ammonia molecule by converting glutamine to glutamate. PurL transfers the ammonia molecule to FGAR to form FGAM in an ATP-dependent manner. PurS interacts with PurQ and PurL and is thought to assist in the transfer of the ammonia molecule from PurQ to PurL. The protein is Phosphoribosylformylglycinamidine synthase subunit PurL of Listeria welshimeri serovar 6b (strain ATCC 35897 / DSM 20650 / CCUG 15529 / CIP 8149 / NCTC 11857 / SLCC 5334 / V8).